A 473-amino-acid chain; its full sequence is Lactate utilization protein B (473 aa).

4Fe-4S ferredoxin-type domains lie at 302–332 (GSEF…GHSY) and 351–380 (YDDY…LHDL). [4Fe-4S] cluster is bound by residues Cys311, Cys314, Cys317, Cys321, Cys364, Cys367, and Cys371.

This sequence belongs to the LutB/YkgF family.

Functionally, is involved in L-lactate degradation and allows cells to grow with lactate as the sole carbon source. Has probably a role as an electron transporter during oxidation of L-lactate. The polypeptide is Lactate utilization protein B (Bacillus cytotoxicus (strain DSM 22905 / CIP 110041 / 391-98 / NVH 391-98)).